The primary structure comprises 311 residues: Geranylgeranyl transferase type-2 subunit beta (311 aa).

PFTB repeat units lie at residues 54–95 (KERI…AMLD), 102–143 (KDKV…AILG), 150–191 (KNTA…KILN), 197–239 (DEEL…AIIG), and 246–288 (RNQL…SLLQ). Geranylgeranyl diphosphate contacts are provided by residues 176–178 (HGA) and 218–230 (RPEK…YGWW). 3 residues coordinate Zn(2+): Asp224, Cys226, and His276.

It belongs to the protein prenyltransferase subunit beta family. As to quaternary structure, heterodimer of an alpha and a beta subunit. Zn(2+) serves as cofactor.

The enzyme catalyses geranylgeranyl diphosphate + L-cysteinyl-[protein] = S-geranylgeranyl-L-cysteinyl-[protein] + diphosphate. Catalyzes the transfer of a geranyl-geranyl moiety from geranyl-geranyl pyrophosphate to proteins having the C-terminal -XCC or -XCXC, where both cysteines may become modified. This Schizosaccharomyces pombe (strain 972 / ATCC 24843) (Fission yeast) protein is Geranylgeranyl transferase type-2 subunit beta (ptb1).